We begin with the raw amino-acid sequence, 314 residues long: Methionyl-tRNA formyltransferase (314 aa).

112–115 serves as a coordination point for (6S)-5,6,7,8-tetrahydrofolate; sequence SLLP.

This sequence belongs to the Fmt family.

The enzyme catalyses L-methionyl-tRNA(fMet) + (6R)-10-formyltetrahydrofolate = N-formyl-L-methionyl-tRNA(fMet) + (6S)-5,6,7,8-tetrahydrofolate + H(+). In terms of biological role, attaches a formyl group to the free amino group of methionyl-tRNA(fMet). The formyl group appears to play a dual role in the initiator identity of N-formylmethionyl-tRNA by promoting its recognition by IF2 and preventing the misappropriation of this tRNA by the elongation apparatus. In Buchnera aphidicola subsp. Acyrthosiphon pisum (strain 5A), this protein is Methionyl-tRNA formyltransferase.